We begin with the raw amino-acid sequence, 406 residues long: ESX-5 secretion system protein EccE5 (406 aa).

A run of 2 helical transmembrane segments spans residues 9–29 and 43–63; these read LALSWPRVTAVFLVDVLILAV and VAWWVGVGVAAVVTLLSVVSY.

It belongs to the EccE family. In terms of assembly, part of the ESX-5 / type VII secretion system (T7SS), which is composed of cytosolic and membrane components. The ESX-5 membrane complex is composed of EccB5, EccC5, EccD5 and EccE5.

Its subcellular location is the cell inner membrane. Part of the ESX-5 specialized secretion system, which is responsible for the secretion of EsxN and a number of PE_PGRS and PPE proteins, including PPE41. The sequence is that of ESX-5 secretion system protein EccE5 from Mycobacterium tuberculosis (strain ATCC 25618 / H37Rv).